The primary structure comprises 378 residues: Cell death-related nuclease 6 (378 aa).

The signal sequence occupies residues 1–17 (MIRQIILIVSLIGISNA). 3 N-linked (GlcNAc...) asparagine glycosylation sites follow: Asn51, Asn92, and Asn111.

Belongs to the DNase II family.

Involved in apoptotic DNA degradation. In Caenorhabditis elegans, this protein is Cell death-related nuclease 6 (crn-6).